The following is a 71-amino-acid chain: Calcium dodecin (71 aa).

Glu18 contacts Ca(2+).

It belongs to the dodecin family. Homododecamer; 12 subunits assemble to form a hollow sphere with a diameter of about 75 Angstroms. Calcium ions are bound at the interface between three subunits.

Binds calcium ions. May play a role in sequestering additional small ligands. This Mycobacterium tuberculosis (strain ATCC 25618 / H37Rv) protein is Calcium dodecin (secE2).